A 1691-amino-acid chain; its full sequence is ADAMTS-like protein 3 (1691 aa).

The N-terminal stretch at 1-26 (MASWTSPWWVLIGMVFMHSPLPQTTA) is a signal peptide. The 50-residue stretch at 75 to 124 (DGNWDAWGDWSDCSRTCGGGASYSLRRCLTGRNCEGQNIRYKTCSNHDCP) folds into the TSP type-1 1 domain. 3 cysteine pairs are disulfide-bonded: cysteine 87–cysteine 118, cysteine 91–cysteine 123, and cysteine 102–cysteine 108. N-linked (GlcNAc...) asparagine glycosylation is present at asparagine 293. TSP type-1 domains lie at 418 to 468 (PLPR…APKP), 478 to 535 (DCPK…IPCY), and 564 to 626 (EEPT…EACD). 3 cysteine pairs are disulfide-bonded: cysteine 576–cysteine 620, cysteine 580–cysteine 625, and cysteine 591–cysteine 609. Residue asparagine 681 is glycosylated (N-linked (GlcNAc...) asparagine). TSP type-1 domains are found at residues 703–760 (CPPR…FDCP), 763–818 (WHIE…ARTD), and 819–881 (CPPH…PECS). The N-linked (GlcNAc...) asparagine glycan is linked to asparagine 797. Intrachain disulfides connect cysteine 831–cysteine 875, cysteine 835–cysteine 880, and cysteine 846–cysteine 863. The region spanning 896–992 (PQILSVQRVY…IAGSAQETVV (97 aa)) is the Ig-like C2-type 1 domain. N-linked (GlcNAc...) asparagine glycosylation is found at asparagine 915 and asparagine 927. A disulfide bond links cysteine 934 and cysteine 982. Asparagine 1102 is a glycosylation site (N-linked (GlcNAc...) asparagine). A disordered region spans residues 1146 to 1184 (PPAAQLRGETGSVSQSSHAKNSGKLTFKPKGPVLMRQSQ). The segment covering 1156–1169 (GSVSQSSHAKNSGK) has biased composition (polar residues). Residues 1185-1279 (PPSISFNKTI…GSDVESSSVL (95 aa)) form the Ig-like C2-type 2 domain. Asparagine 1191 carries N-linked (GlcNAc...) asparagine glycosylation. The cysteines at positions 1215 and 1263 are disulfide-linked. N-linked (GlcNAc...) asparagine glycans are attached at residues asparagine 1292, asparagine 1316, asparagine 1330, asparagine 1343, asparagine 1349, asparagine 1356, asparagine 1432, asparagine 1516, asparagine 1574, and asparagine 1591. The Ig-like C2-type 3 domain occupies 1296-1378 (PEHNHLSVVV…ATNALGKAVA (83 aa)). The cysteines at positions 1321 and 1367 are disulfide-linked. TSP type-1 domains are found at residues 1424-1482 (QEPF…NIRD) and 1483-1545 (CPAR…HPCV). Positions 1597–1644 (CDVCWHTGPWKPCTAACGRGFQSRKVDCIHTRSCKPVAKRHCVQKKKP) constitute a TSP type-1 10 domain. The 37-residue stretch at 1655-1691 (CDRDCTDTTHYCMFVKHLNLCSLDRYKQRCCQSCQEG) folds into the PLAC domain.

Post-translationally, glycosylated. Can be O-fucosylated by POFUT2 on a serine or a threonine residue found within the consensus sequence C1-X(2)-(S/T)-C2-G of the TSP type-1 repeat domains where C1 and C2 are the first and second cysteine residue of the repeat, respectively. Fucosylated repeats can then be further glycosylated by the addition of a beta-1,3-glucose residue by the glucosyltransferase, B3GALTL. Fucosylation mediates the efficient secretion of ADAMTS family members. Can also be C-glycosylated with one or two mannose molecules on tryptophan residues within the consensus sequence W-X-X-W of the TPRs, and N-glycosylated. These other glycosylations can also facilitate secretion. In terms of tissue distribution, expressed in epithelial cells of the colon, fallopian tube, skin, breast, prostate, epididymis, liver, pancreatic islets and bile ducts, as well as by vascular endothelial cells, smooth muscle cells, fibroblasts, cortical and ganglionic neurons and cardiac myocytes. Also expressed by malignant epithelial cells in colon cancer, as well as breast, prostate, renal and skin tumors. Expression is significantly reduced in colon cancer compared to normal colon.

Its subcellular location is the secreted. The protein localises to the extracellular space. It localises to the extracellular matrix. This chain is ADAMTS-like protein 3 (ADAMTSL3), found in Homo sapiens (Human).